Consider the following 188-residue polypeptide: HTH-type transcriptional repressor AcnR (188 aa).

The region spanning 10–70 (TNSRQEILEG…ALAREDAARM (61 aa)) is the HTH tetR-type domain. Positions 33-52 (TVRRLEEATGKSRGAIFHHF) form a DNA-binding region, H-T-H motif. Residues 79–80 (LV), arginine 130, and asparagine 134 each bind citrate. Glutamate 181 contacts Mg(2+). Position 185 (arginine 185) interacts with citrate.

As to quaternary structure, homodimer.

Functionally, acnR negatively controls the expression of the aconitase gene acn. Binds to the imperfect inverted repeat in the acn promoter region. The sequence is that of HTH-type transcriptional repressor AcnR from Corynebacterium glutamicum (strain ATCC 13032 / DSM 20300 / JCM 1318 / BCRC 11384 / CCUG 27702 / LMG 3730 / NBRC 12168 / NCIMB 10025 / NRRL B-2784 / 534).